Consider the following 492-residue polypeptide: Katanin p60 ATPase-containing subunit A1 (492 aa).

The tract at residues 80-186 (STPPKASQQE…ESEPKKFDST (107 aa)) is disordered. Residues 145–171 (PNDKGKAVRGREKKDQQNKGKEEKSKS) show a composition bias toward basic and acidic residues. Residue 250–257 (GPPGTGKT) coordinates ATP.

The protein belongs to the AAA ATPase family. Katanin p60 subunit A1 subfamily. In terms of assembly, can homooligomerize into hexameric rings, which may be promoted by interaction with microtubules. Interacts with KATNB1, which may serve as a targeting subunit.

The protein localises to the cytoplasm. Its subcellular location is the cytoskeleton. It is found in the microtubule organizing center. It localises to the centrosome. The protein resides in the spindle pole. The protein localises to the spindle. The enzyme catalyses n ATP + n H2O + a microtubule = n ADP + n phosphate + (n+1) alpha/beta tubulin heterodimers.. With respect to regulation, ATPase activity is stimulated by microtubules, which promote homooligomerization. ATP-dependent microtubule severing is stimulated by interaction with KATNB1. Catalytic subunit of a complex which severs microtubules in an ATP-dependent manner. Microtubule severing may promote rapid reorganization of cellular microtubule arrays and the release of microtubules from the centrosome following nucleation. This is Katanin p60 ATPase-containing subunit A1 from Gallus gallus (Chicken).